A 183-amino-acid polypeptide reads, in one-letter code: ATP-dependent protease subunit HslV (183 aa).

Threonine 9 is a catalytic residue. Na(+) contacts are provided by alanine 164, cysteine 167, and threonine 170.

The protein belongs to the peptidase T1B family. HslV subfamily. A double ring-shaped homohexamer of HslV is capped on each side by a ring-shaped HslU homohexamer. The assembly of the HslU/HslV complex is dependent on binding of ATP.

The protein localises to the cytoplasm. The enzyme catalyses ATP-dependent cleavage of peptide bonds with broad specificity.. Allosterically activated by HslU binding. In terms of biological role, protease subunit of a proteasome-like degradation complex believed to be a general protein degrading machinery. This Hydrogenovibrio crunogenus (strain DSM 25203 / XCL-2) (Thiomicrospira crunogena) protein is ATP-dependent protease subunit HslV.